A 281-amino-acid chain; its full sequence is Very long chain fatty acid elongase 7 (281 aa).

The residue at position 2 (A2) is an N-acetylalanine. At 2–27 (AFSDLTSRTVRLYDNWIKDADPRVED) the chain is on the lumenal side. The chain crosses the membrane as a helical span at residues 28-48 (WLLMSSPLPQTIILGFYVYFV). Residues 49 to 66 (TSLGPKLMENRKPFELKK) lie on the Cytoplasmic side of the membrane. A helical membrane pass occupies residues 67–87 (VMITYNFSIVLFSVYMFYEFI). Topologically, residues 88–115 (MSGWGTGYSFRCDIVDYSQSPTALRMVR) are lumenal. A disulfide bond links C99 and C231. A helical transmembrane segment spans residues 116-136 (TCWLYYFSKFIELLDTIFFIL). Positions 124, 137, 139, 142, and 147 each coordinate 3-oxoeicosanoyl-CoA. The Cytoplasmic portion of the chain corresponds to 137 to 142 (RKKNSQ). Residues 143–162 (VTFLHVFHHTIMPWTWWFGV) form a helical membrane-spanning segment. Residues 147–151 (HVFHH) carry the HxxHH motif motif. H150 (nucleophile) is an active-site residue. Residues 163–171 (KFAAGGLGT) are Lumenal-facing. A helical transmembrane segment spans residues 172–194 (FHAFLNTAVHVVMYSYYGLCALG). 3-oxoeicosanoyl-CoA-binding residues include Y187, K204, T208, and Q211. Residues 195–206 (PDYQKYLWWKKY) are Cytoplasmic-facing. The helical transmembrane segment at 207–227 (LTSLQLIQFVLITIHISQFFF) threads the bilayer. Residues 228 to 236 (MEDCKYQFP) lie on the Lumenal side of the membrane. The chain crosses the membrane as a helical span at residues 237–257 (VFQYIIMSYGCIFLLLFLHFW). The Cytoplasmic segment spans residues 258–281 (YRAYTKGQRLPKTVKHGICKNKDH). A 3-oxoeicosanoyl-CoA-binding site is contributed by R266. The short motif at 277–281 (KNKDH) is the Di-lysine motif element.

It belongs to the ELO family. ELOVL7 subfamily. Homodimer. Interacts with TECR.

It localises to the endoplasmic reticulum membrane. It carries out the reaction a very-long-chain acyl-CoA + malonyl-CoA + H(+) = a very-long-chain 3-oxoacyl-CoA + CO2 + CoA. The enzyme catalyses eicosanoyl-CoA + malonyl-CoA + H(+) = 3-oxodocosanoyl-CoA + CO2 + CoA. It catalyses the reaction (5Z,8Z,11Z,14Z)-eicosatetraenoyl-CoA + malonyl-CoA + H(+) = (7Z,10Z,13Z,16Z)-3-oxodocosatetraenoyl-CoA + CO2 + CoA. The catalysed reaction is (6Z,9Z,12Z)-octadecatrienoyl-CoA + malonyl-CoA + H(+) = (8Z,11Z,14Z)-3-oxoeicosatrienoyl-CoA + CO2 + CoA. It carries out the reaction (9Z,12Z)-octadecadienoyl-CoA + malonyl-CoA + H(+) = (11Z,14Z)-3-oxoicosa-11,14-dienoyl-CoA + CO2 + CoA. The enzyme catalyses (9Z)-octadecenoyl-CoA + malonyl-CoA + H(+) = 3-oxo-(11Z)-eicosenoyl-CoA + CO2 + CoA. It catalyses the reaction octadecanoyl-CoA + malonyl-CoA + H(+) = 3-oxoeicosanoyl-CoA + CO2 + CoA. The catalysed reaction is hexadecanoyl-CoA + malonyl-CoA + H(+) = 3-oxooctadecanoyl-CoA + CO2 + CoA. It carries out the reaction (9Z,12Z,15Z)-octadecatrienoyl-CoA + malonyl-CoA + H(+) = (11Z,14Z,17Z)-3-oxoeicosatrienoyl-CoA + CO2 + CoA. The protein operates within lipid metabolism; fatty acid biosynthesis. Catalyzes the first and rate-limiting reaction of the four reactions that constitute the long-chain fatty acids elongation cycle. This endoplasmic reticulum-bound enzymatic process allows the addition of 2 carbons to the chain of long- and very long-chain fatty acids (VLCFAs) per cycle. Condensing enzyme with higher activity toward C18 acyl-CoAs, especially C18:3(n-3) acyl-CoAs and C18:3(n-6)-CoAs. Also active toward C20:4-, C18:0-, C18:1-, C18:2- and C16:0-CoAs, and weakly toward C20:0-CoA. Little or no activity toward C22:0-, C24:0-, or C26:0-CoAs. May participate in the production of saturated and polyunsaturated VLCFAs of different chain lengths that are involved in multiple biological processes as precursors of membrane lipids and lipid mediators. The protein is Very long chain fatty acid elongase 7 of Bos taurus (Bovine).